We begin with the raw amino-acid sequence, 249 residues long: 5'-nucleotidase SurE (249 aa).

A divalent metal cation contacts are provided by aspartate 8, aspartate 9, serine 39, and asparagine 96.

This sequence belongs to the SurE nucleotidase family. It depends on a divalent metal cation as a cofactor.

The protein resides in the cytoplasm. The enzyme catalyses a ribonucleoside 5'-phosphate + H2O = a ribonucleoside + phosphate. Functionally, nucleotidase that shows phosphatase activity on nucleoside 5'-monophosphates. In Clostridium tetani (strain Massachusetts / E88), this protein is 5'-nucleotidase SurE.